The following is a 422-amino-acid chain: Probable glycosidase CRR1 (422 aa).

A signal peptide spans Met-1–Gly-20. The GH16 domain occupies Asp-67 to Lys-339. Glu-217 (nucleophile) is an active-site residue. Residue Glu-221 is the Proton donor of the active site.

It belongs to the glycosyl hydrolase 16 family. CRR1 subfamily.

It localises to the spore wall. Spore specific glycosidase involved in spore wall assembly during sporulation. May be involved in copper import. This chain is Probable glycosidase CRR1 (CRR1), found in Saccharomyces cerevisiae (strain ATCC 204508 / S288c) (Baker's yeast).